The following is a 449-amino-acid chain: Tubulin beta chain (449 aa).

Residues glutamine 11, glutamate 69, serine 138, glycine 142, threonine 143, glycine 144, asparagine 204, and asparagine 226 each contribute to the GTP site. Glutamate 69 is a Mg(2+) binding site. The segment at 426 to 449 (QDATAEEEGEFDEEEGEMGAEEGA) is disordered. Residues 429–449 (TAEEEGEFDEEEGEMGAEEGA) are compositionally biased toward acidic residues.

The protein belongs to the tubulin family. As to quaternary structure, dimer of alpha and beta chains. A typical microtubule is a hollow water-filled tube with an outer diameter of 25 nm and an inner diameter of 15 nM. Alpha-beta heterodimers associate head-to-tail to form protofilaments running lengthwise along the microtubule wall with the beta-tubulin subunit facing the microtubule plus end conferring a structural polarity. Microtubules usually have 13 protofilaments but different protofilament numbers can be found in some organisms and specialized cells. The cofactor is Mg(2+).

The protein localises to the cytoplasm. It localises to the cytoskeleton. Tubulin is the major constituent of microtubules, a cylinder consisting of laterally associated linear protofilaments composed of alpha- and beta-tubulin heterodimers. Microtubules grow by the addition of GTP-tubulin dimers to the microtubule end, where a stabilizing cap forms. Below the cap, tubulin dimers are in GDP-bound state, owing to GTPase activity of alpha-tubulin. This is Tubulin beta chain from Toxoplasma gondii.